The sequence spans 518 residues: Membrane-bound lytic murein transglycosylase F (518 aa).

An N-terminal signal peptide occupies residues 1 to 21; it reads MKKLKINYLFIGILALLLAVA. Residues 22–269 form a non-LT domain region; that stretch reads LWPSIPWFGK…RIEEKYLGHG (248 aa). Residues 270 to 518 form an LT domain region; it reads DDFDYVDTRT…SRKGSEEKQN (249 aa). The active site involves Glu-314.

In the N-terminal section; belongs to the bacterial solute-binding protein 3 family. It in the C-terminal section; belongs to the transglycosylase Slt family.

The protein localises to the cell outer membrane. The enzyme catalyses Exolytic cleavage of the (1-&gt;4)-beta-glycosidic linkage between N-acetylmuramic acid (MurNAc) and N-acetylglucosamine (GlcNAc) residues in peptidoglycan, from either the reducing or the non-reducing ends of the peptidoglycan chains, with concomitant formation of a 1,6-anhydrobond in the MurNAc residue.. Its function is as follows. Murein-degrading enzyme that degrades murein glycan strands and insoluble, high-molecular weight murein sacculi, with the concomitant formation of a 1,6-anhydromuramoyl product. Lytic transglycosylases (LTs) play an integral role in the metabolism of the peptidoglycan (PG) sacculus. Their lytic action creates space within the PG sacculus to allow for its expansion as well as for the insertion of various structures such as secretion systems and flagella. The polypeptide is Membrane-bound lytic murein transglycosylase F (Shigella dysenteriae serotype 1 (strain Sd197)).